The sequence spans 367 residues: tRNA 2-selenouridine synthase (367 aa).

In terms of domain architecture, Rhodanese spans 12 to 135 (FLSGVAMLDV…MRGFLIETTD (124 aa)). Cys-95 (S-selanylcysteine intermediate) is an active-site residue.

This sequence belongs to the SelU family. Monomer.

It carries out the reaction 5-methylaminomethyl-2-thiouridine(34) in tRNA + selenophosphate + (2E)-geranyl diphosphate + H2O + H(+) = 5-methylaminomethyl-2-selenouridine(34) in tRNA + (2E)-thiogeraniol + phosphate + diphosphate. The enzyme catalyses 5-methylaminomethyl-2-thiouridine(34) in tRNA + (2E)-geranyl diphosphate = 5-methylaminomethyl-S-(2E)-geranyl-thiouridine(34) in tRNA + diphosphate. It catalyses the reaction 5-methylaminomethyl-S-(2E)-geranyl-thiouridine(34) in tRNA + selenophosphate + H(+) = 5-methylaminomethyl-2-(Se-phospho)selenouridine(34) in tRNA + (2E)-thiogeraniol. The catalysed reaction is 5-methylaminomethyl-2-(Se-phospho)selenouridine(34) in tRNA + H2O = 5-methylaminomethyl-2-selenouridine(34) in tRNA + phosphate. In terms of biological role, involved in the post-transcriptional modification of the uridine at the wobble position (U34) of tRNA(Lys), tRNA(Glu) and tRNA(Gln). Catalyzes the conversion of 2-thiouridine (S2U-RNA) to 2-selenouridine (Se2U-RNA). Acts in a two-step process involving geranylation of 2-thiouridine (S2U) to S-geranyl-2-thiouridine (geS2U) and subsequent selenation of the latter derivative to 2-selenouridine (Se2U) in the tRNA chain. This Cupriavidus necator (strain ATCC 17699 / DSM 428 / KCTC 22496 / NCIMB 10442 / H16 / Stanier 337) (Ralstonia eutropha) protein is tRNA 2-selenouridine synthase.